The sequence spans 79 residues: Acyl carrier protein (79 aa).

Positions 1–76 (MEVFEEVRDV…DVVTYIENLN (76 aa)) constitute a Carrier domain. An O-(pantetheine 4'-phosphoryl)serine modification is found at Ser36.

The protein belongs to the acyl carrier protein (ACP) family. 4'-phosphopantetheine is transferred from CoA to a specific serine of apo-ACP by AcpS. This modification is essential for activity because fatty acids are bound in thioester linkage to the sulfhydryl of the prosthetic group.

The protein localises to the cytoplasm. Its pathway is lipid metabolism; fatty acid biosynthesis. Functionally, carrier of the growing fatty acid chain in fatty acid biosynthesis. This Campylobacter hominis (strain ATCC BAA-381 / DSM 21671 / CCUG 45161 / LMG 19568 / NCTC 13146 / CH001A) protein is Acyl carrier protein.